The following is a 365-amino-acid chain: tRNA-specific 2-thiouridylase MnmA (365 aa).

ATP-binding positions include 6–13 (AMSGGVDS) and Leu32. Cys101 acts as the Nucleophile in catalysis. A disulfide bridge connects residues Cys101 and Cys199. Gly125 contacts ATP. The tract at residues 149-151 (KDQ) is interaction with tRNA. Cys199 functions as the Cysteine persulfide intermediate in the catalytic mechanism.

This sequence belongs to the MnmA/TRMU family.

It is found in the cytoplasm. The catalysed reaction is S-sulfanyl-L-cysteinyl-[protein] + uridine(34) in tRNA + AH2 + ATP = 2-thiouridine(34) in tRNA + L-cysteinyl-[protein] + A + AMP + diphosphate + H(+). Its function is as follows. Catalyzes the 2-thiolation of uridine at the wobble position (U34) of tRNA, leading to the formation of s(2)U34. The chain is tRNA-specific 2-thiouridylase MnmA from Corynebacterium glutamicum (strain R).